The primary structure comprises 418 residues: Ciliary microtubule-associated protein 2 (418 aa).

As to expression, sperm.

The sequence is that of Ciliary microtubule-associated protein 2 from Homo sapiens (Human).